Consider the following 206-residue polypeptide: Large ribosomal subunit protein uL22m (206 aa).

The transit peptide at 1–40 (MAAALLRELGALWVPNLRIWTTQMLRVLPQSCIHTSTSLD) directs the protein to the mitochondrion.

This sequence belongs to the universal ribosomal protein uL22 family. As to quaternary structure, component of the mitochondrial ribosome large subunit (39S) which comprises a 16S rRNA and about 50 distinct proteins.

It is found in the mitochondrion. This chain is Large ribosomal subunit protein uL22m (Mrpl22), found in Rattus norvegicus (Rat).